Here is a 519-residue protein sequence, read N- to C-terminus: MEFPEHSRHLLQCLSEQRHQGFLCDCTVLVGDAHFRAHRAVLASCSMYFHLFYKDQLDKKNIVYLNSDIVTAPAFALLLEFMYEGKLQFKDLPIEDVLAAASYLHMYDIVKVCKKKLKEKATTEADSTKKEEDTLSCSDKIECLSDGSSHMAGDLPSDEDDVEEEKINSKTDLATESGNMWIRLSSDSASIPQTGGEVDTHTTAAGKTADSPCSSTGSLSHRSATSMGDSTDVDCVLDLSVKSSLSGTETLNNSYLSSQEILRNSLVQVKIEREASCEDNDIHTSEYDIERNTVKENVSSNIRAPYEPVHLAPIREDSVLRELDHDDKAINDDMITPENERVQMEANIDNSLLPYVQNILSPAGQIFMCPLCNKVFPSPHILQIHLSTHFREQEGIRSKPTNDVHVPTCSLCGKTFSCMYTLKRHERTHSGEKPFTCTQCGKSFQYSHNLSRHAVVHTREKPHACKWCERRFTQSGDLYRHIRKFHCELVNSLSVKSETLGLPAVRDWTLEDSSQELWK.

Positions 24-91 (CDCTVLVGDA…MYEGKLQFKD (68 aa)) constitute a BTB domain. The segment at 189-227 (ASIPQTGGEVDTHTTAAGKTADSPCSSTGSLSHRSATSM) is disordered. The segment covering 201–227 (HTTAAGKTADSPCSSTGSLSHRSATSM) has biased composition (polar residues). 4 consecutive C2H2-type zinc fingers follow at residues 367 to 389 (FMCP…LSTH), 407 to 429 (PTCS…ERTH), 435 to 457 (FTCT…AVVH), and 463 to 486 (HACK…RKFH).

Belongs to the krueppel C2H2-type zinc-finger protein family. ZBTB18 subfamily.

The protein localises to the nucleus. Functionally, transcriptional repressor that plays a role in various developmental processes. Specifically binds the consensus DNA sequence 5'-[AC]ACATCTG[GT][AC]-3' which contains the E box core, and acts by recruiting chromatin remodeling multiprotein complexes. The polypeptide is Zinc finger and BTB domain-containing protein 18.3 (zbtb18.3) (Xenopus laevis (African clawed frog)).